A 237-amino-acid polypeptide reads, in one-letter code: Probable transcriptional regulatory protein Mfl546 (237 aa).

The disordered stretch occupies residues 1-20 (MGRAHEVRAASMAKTAAKKS). The span at 9-20 (AASMAKTAAKKS) shows a compositional bias: low complexity.

It belongs to the TACO1 family.

It is found in the cytoplasm. This Mesoplasma florum (strain ATCC 33453 / NBRC 100688 / NCTC 11704 / L1) (Acholeplasma florum) protein is Probable transcriptional regulatory protein Mfl546.